Here is a 291-residue protein sequence, read N- to C-terminus: ATP synthase gamma chain (291 aa).

This sequence belongs to the ATPase gamma chain family. In terms of assembly, F-type ATPases have 2 components, CF(1) - the catalytic core - and CF(0) - the membrane proton channel. CF(1) has five subunits: alpha(3), beta(3), gamma(1), delta(1), epsilon(1). CF(0) has three main subunits: a, b and c.

The protein resides in the cell membrane. In terms of biological role, produces ATP from ADP in the presence of a proton gradient across the membrane. The gamma chain is believed to be important in regulating ATPase activity and the flow of protons through the CF(0) complex. The chain is ATP synthase gamma chain from Streptococcus equi subsp. equi (strain 4047).